The chain runs to 157 residues: SsrA-binding protein (157 aa).

Belongs to the SmpB family.

The protein resides in the cytoplasm. In terms of biological role, required for rescue of stalled ribosomes mediated by trans-translation. Binds to transfer-messenger RNA (tmRNA), required for stable association of tmRNA with ribosomes. tmRNA and SmpB together mimic tRNA shape, replacing the anticodon stem-loop with SmpB. tmRNA is encoded by the ssrA gene; the 2 termini fold to resemble tRNA(Ala) and it encodes a 'tag peptide', a short internal open reading frame. During trans-translation Ala-aminoacylated tmRNA acts like a tRNA, entering the A-site of stalled ribosomes, displacing the stalled mRNA. The ribosome then switches to translate the ORF on the tmRNA; the nascent peptide is terminated with the 'tag peptide' encoded by the tmRNA and targeted for degradation. The ribosome is freed to recommence translation, which seems to be the essential function of trans-translation. The polypeptide is SsrA-binding protein (Limosilactobacillus reuteri (strain DSM 20016) (Lactobacillus reuteri)).